A 718-amino-acid polypeptide reads, in one-letter code: LON peptidase N-terminal domain and RING finger protein 3 (718 aa).

The interval 1 to 69 is disordered; that stretch reads MESLRTEQML…PGTSTPESKV (69 aa). A compositionally biased stretch (polar residues) spans 57-66; the sequence is EQSPGTSTPE. Residues 67 to 100 form a TPR 1 repeat; it reads SKVLLTQADALASRGRIREALEVYRQLSERQQLV. The RING-type 1 zinc-finger motif lies at 158–196; sequence CRKCHGFLSDPVSLSCGHTFCKLCLERGRAADRRCALCG. TPR repeat units lie at residues 243-276 and 278-310; these read ASQLRHEGNRLYRERQVEAALLKYNEAVKLAPND and LLYSNRSQIYFTLESHENALHDAEIACKLRPMG. The segment at 322-413 is disordered; that stretch reads SQEEAAARGD…TDQGDKPALS (92 aa). Over residues 339–352 the composition is skewed to basic and acidic residues; it reads AKVKGDGQQHHMKD. An RING-type 2 zinc finger spans residues 426–464; that stretch reads CALCMRLFYEPVTTPCGHTFCLKCLERCLDHNAKCPLCK. The Lon N-terminal domain maps to 505–714; sequence MEELSNLNKN…GIRRVLAFIS (210 aa).

In Macaca fascicularis (Crab-eating macaque), this protein is LON peptidase N-terminal domain and RING finger protein 3 (LONRF3).